The primary structure comprises 261 residues: 5'-nucleotidase SurE (261 aa).

4 residues coordinate a divalent metal cation: Asp8, Asp9, Ser43, and Asn96.

The protein belongs to the SurE nucleotidase family. A divalent metal cation serves as cofactor.

It is found in the cytoplasm. The catalysed reaction is a ribonucleoside 5'-phosphate + H2O = a ribonucleoside + phosphate. Its function is as follows. Nucleotidase that shows phosphatase activity on nucleoside 5'-monophosphates. The protein is 5'-nucleotidase SurE of Cereibacter sphaeroides (strain ATCC 17025 / ATH 2.4.3) (Rhodobacter sphaeroides).